A 702-amino-acid polypeptide reads, in one-letter code: Ribosomal RNA large subunit methyltransferase K/L (702 aa).

Positions 43-154 constitute a THUMP domain; that stretch reads LVYQSLMWSR…KETASIALDL (112 aa).

Belongs to the methyltransferase superfamily. RlmKL family.

It localises to the cytoplasm. The enzyme catalyses guanosine(2445) in 23S rRNA + S-adenosyl-L-methionine = N(2)-methylguanosine(2445) in 23S rRNA + S-adenosyl-L-homocysteine + H(+). The catalysed reaction is guanosine(2069) in 23S rRNA + S-adenosyl-L-methionine = N(2)-methylguanosine(2069) in 23S rRNA + S-adenosyl-L-homocysteine + H(+). Its function is as follows. Specifically methylates the guanine in position 2445 (m2G2445) and the guanine in position 2069 (m7G2069) of 23S rRNA. The polypeptide is Ribosomal RNA large subunit methyltransferase K/L (Shigella flexneri serotype 5b (strain 8401)).